The primary structure comprises 110 residues: Parvalbumin alpha (110 aa).

Ser2 is modified (N-acetylserine). 2 positions are modified to phosphoserine: Ser2 and Ser24. 2 EF-hand domains span residues 39–74 and 78–110; these read KSPEDVKKVFHILDKDKSGFIEEEELGFILKGFSPD and LSVKETKTLLAAGDKDGDGKIGADEFSTLVAES. The Ca(2+) site is built by Asp52, Asp54, Ser56, Phe58, Glu60, Glu63, Asp91, Asp93, Asp95, Lys97, and Glu102.

The protein belongs to the parvalbumin family.

In terms of biological role, in muscle, parvalbumin is thought to be involved in relaxation after contraction. It binds two calcium ions. This chain is Parvalbumin alpha (PVALB), found in Bos taurus (Bovine).